The following is a 101-amino-acid chain: Protein PIP-1 (101 aa).

An N-terminal signal peptide occupies residues 1–23 (MGKCLLLPLLLVVLSSLLGFPQA). A UPAR/Ly6 domain is found at 24–101 (LECFQCQRVS…CHDSPFCNKF (78 aa)). 5 disulfides stabilise this stretch: Cys-26/Cys-53, Cys-29/Cys-38, Cys-45/Cys-71, Cys-75/Cys-91, and Cys-92/Cys-98. N-linked (GlcNAc...) asparagine glycosylation is present at Asn-84.

It localises to the secreted. The chain is Protein PIP-1 from Sus scrofa (Pig).